Reading from the N-terminus, the 384-residue chain is DNA polymerase IV (384 aa).

Residues 5-182 (IIHVDMDAFF…LPVTKVHGIG (178 aa)) form the UmuC domain. Residues D9, M10, and D103 each coordinate Mg(2+). Residue E104 is part of the active site.

The protein belongs to the DNA polymerase type-Y family. In terms of assembly, monomer. Mg(2+) is required as a cofactor.

Its subcellular location is the cytoplasm. It carries out the reaction DNA(n) + a 2'-deoxyribonucleoside 5'-triphosphate = DNA(n+1) + diphosphate. In terms of biological role, poorly processive, error-prone DNA polymerase involved in translesion repair and untargeted mutagenesis. Copies undamaged DNA at stalled replication forks, which arise in vivo from mismatched or misaligned primer ends. These misaligned primers can be extended by PolIV. Exhibits no 3'-5' exonuclease (proofreading) activity. Involved in translesional synthesis. Primer extension fidelity in vitro is temperature-dependent. Inserts a correct base opposite templating bases at 70 degrees Celsius, but at 37 degrees Celsius in addition to correct base pairing, base transitions, transversions and frameshifts can occur. Preferably forms erroneous base pairs C:T. Bypasses 8-oxo-dG oxidative damage by incorporating dATP or dCTP opposite of the damaged DNA template site at both temperatures in vitro. The protein is DNA polymerase IV of Caldanaerobacter subterraneus subsp. tengcongensis (strain DSM 15242 / JCM 11007 / NBRC 100824 / MB4) (Thermoanaerobacter tengcongensis).